Here is a 260-residue protein sequence, read N- to C-terminus: MTHQTHAYHMVNPSPWPLTGALSALLMTSGLAMWFHFNSTALLMIGLTTNMLTMYQWWRDIIRESTFQGHHTPAVQKGLRYGMILFIISEVLFFTGFFWAFYHSSLAPTPELGGCWPPTGIHPLNPLEVPLLNTSVLLASGVSITWAHHSLMEGDRNHMLQALFITITLGVYFTLLQASEYYEAPFTISDGVYGSTFFVATGFHGLHVIIGSTFLIVCFFRQLKFHFTSNHHFGFEAAAWYWHFVDVVWLFLYVSIYWWG.

Residues 1 to 15 (MTHQTHAYHMVNPSP) lie on the Mitochondrial matrix side of the membrane. Residues 16-34 (WPLTGALSALLMTSGLAMW) traverse the membrane as a helical segment. The Mitochondrial intermembrane segment spans residues 35 to 40 (FHFNST). The helical transmembrane segment at 41–66 (ALLMIGLTTNMLTMYQWWRDIIREST) threads the bilayer. The Mitochondrial matrix segment spans residues 67–72 (FQGHHT). A helical membrane pass occupies residues 73-105 (PAVQKGLRYGMILFIISEVLFFTGFFWAFYHSS). Residues 106–128 (LAPTPELGGCWPPTGIHPLNPLE) are Mitochondrial intermembrane-facing. Residues 129–152 (VPLLNTSVLLASGVSITWAHHSLM) form a helical membrane-spanning segment. Residues 153 to 155 (EGD) are Mitochondrial matrix-facing. Residues 156-183 (RNHMLQALFITITLGVYFTLLQASEYYE) traverse the membrane as a helical segment. The Mitochondrial intermembrane portion of the chain corresponds to 184-190 (APFTISD). Residues 191-223 (GVYGSTFFVATGFHGLHVIIGSTFLIVCFFRQL) form a helical membrane-spanning segment. The Mitochondrial matrix segment spans residues 224 to 232 (KFHFTSNHH). The chain crosses the membrane as a helical span at residues 233–256 (FGFEAAAWYWHFVDVVWLFLYVSI). The Mitochondrial intermembrane segment spans residues 257-260 (YWWG).

It belongs to the cytochrome c oxidase subunit 3 family. As to quaternary structure, component of the cytochrome c oxidase (complex IV, CIV), a multisubunit enzyme composed of 14 subunits. The complex is composed of a catalytic core of 3 subunits MT-CO1, MT-CO2 and MT-CO3, encoded in the mitochondrial DNA, and 11 supernumerary subunits COX4I, COX5A, COX5B, COX6A, COX6B, COX6C, COX7A, COX7B, COX7C, COX8 and NDUFA4, which are encoded in the nuclear genome. The complex exists as a monomer or a dimer and forms supercomplexes (SCs) in the inner mitochondrial membrane with NADH-ubiquinone oxidoreductase (complex I, CI) and ubiquinol-cytochrome c oxidoreductase (cytochrome b-c1 complex, complex III, CIII), resulting in different assemblies (supercomplex SCI(1)III(2)IV(1) and megacomplex MCI(2)III(2)IV(2)).

It localises to the mitochondrion inner membrane. It carries out the reaction 4 Fe(II)-[cytochrome c] + O2 + 8 H(+)(in) = 4 Fe(III)-[cytochrome c] + 2 H2O + 4 H(+)(out). In terms of biological role, component of the cytochrome c oxidase, the last enzyme in the mitochondrial electron transport chain which drives oxidative phosphorylation. The respiratory chain contains 3 multisubunit complexes succinate dehydrogenase (complex II, CII), ubiquinol-cytochrome c oxidoreductase (cytochrome b-c1 complex, complex III, CIII) and cytochrome c oxidase (complex IV, CIV), that cooperate to transfer electrons derived from NADH and succinate to molecular oxygen, creating an electrochemical gradient over the inner membrane that drives transmembrane transport and the ATP synthase. Cytochrome c oxidase is the component of the respiratory chain that catalyzes the reduction of oxygen to water. Electrons originating from reduced cytochrome c in the intermembrane space (IMS) are transferred via the dinuclear copper A center (CU(A)) of subunit 2 and heme A of subunit 1 to the active site in subunit 1, a binuclear center (BNC) formed by heme A3 and copper B (CU(B)). The BNC reduces molecular oxygen to 2 water molecules using 4 electrons from cytochrome c in the IMS and 4 protons from the mitochondrial matrix. This Bos mutus grunniens (Wild yak) protein is Cytochrome c oxidase subunit 3 (MT-CO3).